The following is an 801-amino-acid chain: Mediator of RNA polymerase II transcription subunit 25 (801 aa).

Low complexity-rich tracts occupy residues 647–676, 687–710, and 722–735; these read PQQL…QPGA, PQLR…QQPL, and PHQA…HQAP. A disordered region spans residues 647–735; it reads PQQLASQAPP…MGQQMQHQAP (89 aa). The LXXLL motif signature appears at 689 to 693; that stretch reads LRNLL.

The protein belongs to the Mediator complex subunit 25 family. As to quaternary structure, component of the Mediator complex.

It is found in the nucleus. Its function is as follows. Component of the Mediator complex, a coactivator involved in the regulated transcription of nearly all RNA polymerase II-dependent genes. Mediator functions as a bridge to convey information from gene-specific regulatory proteins to the basal RNA polymerase II transcription machinery. Mediator is recruited to promoters by direct interactions with regulatory proteins and serves as a scaffold for the assembly of a functional preinitiation complex with RNA polymerase II and the general transcription factors. This is Mediator of RNA polymerase II transcription subunit 25 (med25) from Xenopus laevis (African clawed frog).